Consider the following 299-residue polypeptide: Bifunctional protein FolD (299 aa).

NADP(+) contacts are provided by residues 168-170 (GRS), serine 193, and isoleucine 234.

This sequence belongs to the tetrahydrofolate dehydrogenase/cyclohydrolase family. Homodimer.

The enzyme catalyses (6R)-5,10-methylene-5,6,7,8-tetrahydrofolate + NADP(+) = (6R)-5,10-methenyltetrahydrofolate + NADPH. It carries out the reaction (6R)-5,10-methenyltetrahydrofolate + H2O = (6R)-10-formyltetrahydrofolate + H(+). The protein operates within one-carbon metabolism; tetrahydrofolate interconversion. Its function is as follows. Catalyzes the oxidation of 5,10-methylenetetrahydrofolate to 5,10-methenyltetrahydrofolate and then the hydrolysis of 5,10-methenyltetrahydrofolate to 10-formyltetrahydrofolate. This Bartonella henselae (strain ATCC 49882 / DSM 28221 / CCUG 30454 / Houston 1) (Rochalimaea henselae) protein is Bifunctional protein FolD.